A 308-amino-acid polypeptide reads, in one-letter code: Glycerol-3-phosphate dehydrogenase [NAD(P)+] (308 aa).

NADPH-binding residues include Trp-15, Arg-35, Arg-36, and Lys-83. Sn-glycerol 3-phosphate-binding residues include Lys-83 and Gly-111. Residue Ser-115 coordinates NADPH. Lys-166, Asp-219, Ser-229, Arg-230, and Asn-231 together coordinate sn-glycerol 3-phosphate. The active-site Proton acceptor is the Lys-166. Arg-230 contacts NADPH. Glu-256 contacts NADPH.

It belongs to the NAD-dependent glycerol-3-phosphate dehydrogenase family.

Its subcellular location is the cytoplasm. The enzyme catalyses sn-glycerol 3-phosphate + NAD(+) = dihydroxyacetone phosphate + NADH + H(+). It catalyses the reaction sn-glycerol 3-phosphate + NADP(+) = dihydroxyacetone phosphate + NADPH + H(+). It functions in the pathway membrane lipid metabolism; glycerophospholipid metabolism. Functionally, catalyzes the reduction of the glycolytic intermediate dihydroxyacetone phosphate (DHAP) to sn-glycerol 3-phosphate (G3P), the key precursor for phospholipid synthesis. This Synechococcus elongatus (strain ATCC 33912 / PCC 7942 / FACHB-805) (Anacystis nidulans R2) protein is Glycerol-3-phosphate dehydrogenase [NAD(P)+].